We begin with the raw amino-acid sequence, 425 residues long: RNA polymerase II-associated factor 1 homolog (425 aa).

Residues 152-174 (KKNQQVEDMYRDKQSQIDAINKT) are a coiled coil. Residues 331–425 (SRKSKLTLTY…KEPTVDSDSD (95 aa)) are disordered. Basic and acidic residues-rich tracts occupy residues 344–380 (SELEQKDMNKREAELYEQPKTRKQEILEKIQEKKEEG) and 393–402 (DKPQKSRSDS).

It belongs to the PAF1 family. As to quaternary structure, component of the PAF1 complex which consists of at least cdc-73, ctr-9, leo-1, pafo-1 and rtfo-1.

It localises to the nucleus. Component of the PAF1 complex which is a multifunctional complex involved in transcription initiation via genetic interactions with TATA-binding proteins, elongation and transcription-coupled histone modification. The chain is RNA polymerase II-associated factor 1 homolog from Caenorhabditis elegans.